Here is a 147-residue protein sequence, read N- to C-terminus: Probable inactive ribonuclease-like protein 12 (147 aa).

The signal sequence occupies residues 1–20; the sequence is MIIMVIIFLVLLFWENEVND.

The protein belongs to the pancreatic ribonuclease family.

It localises to the secreted. Does not exhibit any ribonuclease activity. In Homo sapiens (Human), this protein is Probable inactive ribonuclease-like protein 12 (RNASE12).